We begin with the raw amino-acid sequence, 84 residues long: Putative antitoxin VapB7 (84 aa).

Functionally, antitoxin component of a possible type II toxin-antitoxin (TA) system. The cognate toxin is VapC7. This is Putative antitoxin VapB7 (vapB7) from Mycobacterium tuberculosis (strain ATCC 25618 / H37Rv).